A 79-amino-acid chain; its full sequence is UPF0349 protein GTNG_2908 (79 aa).

It belongs to the UPF0349 family.

This chain is UPF0349 protein GTNG_2908, found in Geobacillus thermodenitrificans (strain NG80-2).